The primary structure comprises 94 residues: Pyrimidine/purine nucleoside phosphorylase (94 aa).

Belongs to the nucleoside phosphorylase PpnP family.

It catalyses the reaction a purine D-ribonucleoside + phosphate = a purine nucleobase + alpha-D-ribose 1-phosphate. It carries out the reaction adenosine + phosphate = alpha-D-ribose 1-phosphate + adenine. The enzyme catalyses cytidine + phosphate = cytosine + alpha-D-ribose 1-phosphate. The catalysed reaction is guanosine + phosphate = alpha-D-ribose 1-phosphate + guanine. It catalyses the reaction inosine + phosphate = alpha-D-ribose 1-phosphate + hypoxanthine. It carries out the reaction thymidine + phosphate = 2-deoxy-alpha-D-ribose 1-phosphate + thymine. The enzyme catalyses uridine + phosphate = alpha-D-ribose 1-phosphate + uracil. The catalysed reaction is xanthosine + phosphate = alpha-D-ribose 1-phosphate + xanthine. Its function is as follows. Catalyzes the phosphorolysis of diverse nucleosides, yielding D-ribose 1-phosphate and the respective free bases. Can use uridine, adenosine, guanosine, cytidine, thymidine, inosine and xanthosine as substrates. Also catalyzes the reverse reactions. The sequence is that of Pyrimidine/purine nucleoside phosphorylase from Aeromonas hydrophila subsp. hydrophila (strain ATCC 7966 / DSM 30187 / BCRC 13018 / CCUG 14551 / JCM 1027 / KCTC 2358 / NCIMB 9240 / NCTC 8049).